The chain runs to 393 residues: Na(+)/H(+) antiporter NhaA (393 aa).

A run of 12 helical transmembrane segments spans residues 23–43 (AGGITLMAAAALALIVANSPF), 58–78 (LSLAHWINDALMAIFFLLVGL), 96–116 (MLPGIAAAGGVILPAIIFAVL), 126–146 (GWAVPSATDIAFALGVLSLLG), 155–175 (VFLATLAILDDLAAVVIIAIF), 178–198 (AEISMPYLGAAFITAAVLFVM), 201–221 (MGVVKLLPYLISAVILWFFVF), 224–244 (GVHATVAGVVAALMIPLKPAP), 265–285 (VAFIVVPIFGFANAGISFKGL), 298–318 (ILLGLFLGKQFGVFGAAWLAI), 334–354 (LYGVAILCGIGFTMSIFIGLL), and 367–387 (IGVLSGSALSAICGYLLLRAA).

It belongs to the NhaA Na(+)/H(+) (TC 2.A.33) antiporter family.

It localises to the cell inner membrane. It catalyses the reaction Na(+)(in) + 2 H(+)(out) = Na(+)(out) + 2 H(+)(in). Its function is as follows. Na(+)/H(+) antiporter that extrudes sodium in exchange for external protons. The polypeptide is Na(+)/H(+) antiporter NhaA (Brucella canis (strain ATCC 23365 / NCTC 10854 / RM-666)).